Reading from the N-terminus, the 232-residue chain is Large ribosomal subunit protein uL1 (232 aa).

It belongs to the universal ribosomal protein uL1 family. As to quaternary structure, part of the 50S ribosomal subunit.

Binds directly to 23S rRNA. The L1 stalk is quite mobile in the ribosome, and is involved in E site tRNA release. Its function is as follows. Protein L1 is also a translational repressor protein, it controls the translation of the L11 operon by binding to its mRNA. The protein is Large ribosomal subunit protein uL1 of Xylella fastidiosa (strain M12).